Consider the following 124-residue polypeptide: Flagellar transcriptional regulator FlhD (124 aa).

Belongs to the FlhD family. Homodimer; disulfide-linked. Forms a heterohexamer composed of two FlhC and four FlhD subunits. Each FlhC binds a FlhD dimer, forming a heterotrimer, and a hexamer assembles by dimerization of two heterotrimers.

The protein resides in the cytoplasm. Functionally, functions in complex with FlhC as a master transcriptional regulator that regulates transcription of several flagellar and non-flagellar operons by binding to their promoter region. Activates expression of class 2 flagellar genes, including fliA, which is a flagellum-specific sigma factor that turns on the class 3 genes. Also regulates genes whose products function in a variety of physiological pathways. The chain is Flagellar transcriptional regulator FlhD from Pectobacterium carotovorum (Erwinia carotovora).